The chain runs to 200 residues: Protein Syd (200 aa).

The protein belongs to the Syd family.

It is found in the cell inner membrane. In terms of biological role, interacts with the SecY protein in vivo. May bind preferentially to an uncomplexed state of SecY, thus functioning either as a chelating agent for excess SecY in the cell or as a regulatory factor that negatively controls the translocase function. The protein is Protein Syd of Colwellia psychrerythraea (strain 34H / ATCC BAA-681) (Vibrio psychroerythus).